The sequence spans 79 residues: ATP synthase subunit c (79 aa).

The next 2 helical transmembrane spans lie at 11 to 31 (MAAA…IGIL) and 53 to 73 (FFIV…LGLY).

It belongs to the ATPase C chain family. As to quaternary structure, F-type ATPases have 2 components, F(1) - the catalytic core - and F(0) - the membrane proton channel. F(1) has five subunits: alpha(3), beta(3), gamma(1), delta(1), epsilon(1). F(0) has three main subunits: a(1), b(2) and c(10-14). The alpha and beta chains form an alternating ring which encloses part of the gamma chain. F(1) is attached to F(0) by a central stalk formed by the gamma and epsilon chains, while a peripheral stalk is formed by the delta and b chains.

It localises to the cell inner membrane. In terms of biological role, f(1)F(0) ATP synthase produces ATP from ADP in the presence of a proton or sodium gradient. F-type ATPases consist of two structural domains, F(1) containing the extramembraneous catalytic core and F(0) containing the membrane proton channel, linked together by a central stalk and a peripheral stalk. During catalysis, ATP synthesis in the catalytic domain of F(1) is coupled via a rotary mechanism of the central stalk subunits to proton translocation. Key component of the F(0) channel; it plays a direct role in translocation across the membrane. A homomeric c-ring of between 10-14 subunits forms the central stalk rotor element with the F(1) delta and epsilon subunits. This chain is ATP synthase subunit c, found in Yersinia enterocolitica serotype O:8 / biotype 1B (strain NCTC 13174 / 8081).